The primary structure comprises 51 residues: Large ribosomal subunit protein eL39 (51 aa).

The protein belongs to the eukaryotic ribosomal protein eL39 family. In terms of assembly, part of the 50S ribosomal subunit.

The protein is Large ribosomal subunit protein eL39 of Thermococcus kodakarensis (strain ATCC BAA-918 / JCM 12380 / KOD1) (Pyrococcus kodakaraensis (strain KOD1)).